The primary structure comprises 280 residues: 23S rRNA (guanine(748)-N(1))-methyltransferase (280 aa).

Cys-11, Cys-14, Cys-27, and His-31 together coordinate Zn(2+). S-adenosyl-L-methionine contacts are provided by residues Tyr-70, 100–101, and His-188; that span reads TG.

It belongs to the methyltransferase superfamily. RlmA family.

It catalyses the reaction guanosine(748) in 23S rRNA + S-adenosyl-L-methionine = N(1)-methylguanosine(748) in 23S rRNA + S-adenosyl-L-homocysteine + H(+). Specifically methylates the guanosine in position 748 of 23S rRNA. Confers resistance to the macrolide antibiotic tylosine. The chain is 23S rRNA (guanine(748)-N(1))-methyltransferase (rlmAII) from Streptomyces fradiae (Streptomyces roseoflavus).